Reading from the N-terminus, the 384-residue chain is NADH-ubiquinone oxidoreductase chain 5 (384 aa).

12 consecutive transmembrane segments (helical) span residues 12–32 (FYFL…FLLM), 50–70 (IVMT…VLLI), 92–112 (ILLV…PNLI), 113–133 (SILL…IYFQ), 153–173 (VALL…YIFY), 183–203 (MMII…QIPF), 215–235 (TPVS…YLLI), 244–264 (WWMA…AGLG), 274–293 (IIAL…LSMG), 298–320 (AFFH…GSII), 343–363 (CSCF…AGFY), and 364–384 (SKDL…SFFL).

The protein belongs to the complex I subunit 5 family.

Its subcellular location is the mitochondrion inner membrane. It carries out the reaction a ubiquinone + NADH + 5 H(+)(in) = a ubiquinol + NAD(+) + 4 H(+)(out). Core subunit of the mitochondrial membrane respiratory chain NADH dehydrogenase (Complex I) that is believed to belong to the minimal assembly required for catalysis. Complex I functions in the transfer of electrons from NADH to the respiratory chain. The immediate electron acceptor for the enzyme is believed to be ubiquinone. The polypeptide is NADH-ubiquinone oxidoreductase chain 5 (ND5) (Anopheles arabiensis (Mosquito)).